Reading from the N-terminus, the 180-residue chain is Putative peroxiredoxin YkuU (180 aa).

The Thioredoxin domain maps to 4-165 (RMVGKQAPRF…TLRVLQALQT (162 aa)). The active-site Cysteine sulfenic acid (-SOH) intermediate is C52.

The protein belongs to the peroxiredoxin family. AhpC/Prx1 subfamily. As to quaternary structure, homodimer; disulfide-linked, upon oxidation.

The protein localises to the cytoplasm. It carries out the reaction a hydroperoxide + [protein]-dithiol = [protein]-disulfide + an alcohol + H2O. Thiol-specific peroxidase that catalyzes the reduction of hydrogen peroxide and organic hydroperoxides to water and alcohols, respectively. Plays a role in cell protection against oxidative stress by detoxifying peroxides. In Bacillus subtilis (strain 168), this protein is Putative peroxiredoxin YkuU (ykuU).